The sequence spans 338 residues: Bifunctional methylenetetrahydrofolate dehydrogenase/cyclohydrolase 2, mitochondrial (338 aa).

Residues 89–93 and 136–138 each bind substrate; these read YVRNK and VQL. NAD(+) contacts are provided by residues 205–207 and Arg-238; that span reads GRS. 314–318 serves as a coordination point for substrate; sequence PGGVG.

It belongs to the tetrahydrofolate dehydrogenase/cyclohydrolase family. Mg(2+) serves as cofactor. As to expression, widely expressed.

It localises to the mitochondrion inner membrane. The enzyme catalyses (6R)-5,10-methylene-5,6,7,8-tetrahydrofolate + NADP(+) = (6R)-5,10-methenyltetrahydrofolate + NADPH. It carries out the reaction (6R)-5,10-methylene-5,6,7,8-tetrahydrofolate + NAD(+) = (6R)-5,10-methenyltetrahydrofolate + NADH. It catalyses the reaction (6R)-5,10-methenyltetrahydrofolate + H2O = (6R)-10-formyltetrahydrofolate + H(+). The protein operates within one-carbon metabolism; tetrahydrofolate interconversion. In terms of biological role, bifunctional mitochondrial folate-interconverting enzyme that has both NAD/NADP-dependent methylenetetrahydrofolate dehydrogenase and methenyltetrahydrofolate cyclohydrolase activities. Functionally, has no NAD/NADP-dependent methylenetetrahydrofolate dehydrogenase activity. This Rattus norvegicus (Rat) protein is Bifunctional methylenetetrahydrofolate dehydrogenase/cyclohydrolase 2, mitochondrial.